The primary structure comprises 540 residues: Esterase B1 (540 aa).

An intrachain disulfide couples Cys68 to Cys81. The Acyl-ester intermediate role is filled by Ser191. Catalysis depends on charge relay system residues Glu324 and His442. A glycan (N-linked (GlcNAc...) asparagine) is linked at Asn452.

Belongs to the type-B carboxylesterase/lipase family.

The enzyme catalyses a carboxylic ester + H2O = an alcohol + a carboxylate + H(+). Its function is as follows. Overproduction of nonspecific esterases is a common mechanism of resistance to organophosphate insecticides. This is Esterase B1 (B1) from Culex pipiens (House mosquito).